A 510-amino-acid polypeptide reads, in one-letter code: ATP-dependent zinc metalloprotease FtsH 2 (510 aa).

Residues 1–4 (MKKN) are Cytoplasmic-facing. The helical transmembrane segment at 5 to 25 (LHIIILALSIFINLLFIYIFI) threads the bilayer. Over 26–31 (SEVKPN) the chain is Extracellular. Residues 32–52 (LNLNLSFILTAAVIVVTYLLF) traverse the membrane as a helical segment. Over 53 to 510 (KNKFSELMPV…LWEEENTLCV (458 aa)) the chain is Cytoplasmic. Residue 124–131 (GPPGTGKT) coordinates ATP. His343 lines the Zn(2+) pocket. Glu344 is a catalytic residue. The Zn(2+) site is built by His347 and Asp418.

This sequence in the central section; belongs to the AAA ATPase family. In the C-terminal section; belongs to the peptidase M41 family. As to quaternary structure, homohexamer. Zn(2+) is required as a cofactor.

The protein localises to the cell membrane. Functionally, acts as a processive, ATP-dependent zinc metallopeptidase for both cytoplasmic and membrane proteins. Plays a role in the quality control of integral membrane proteins. This Thermoanaerobacter sp. (strain X514) protein is ATP-dependent zinc metalloprotease FtsH 2.